A 156-amino-acid polypeptide reads, in one-letter code: Eosinophil cationic-type ribonuclease 3 (156 aa).

The first 25 residues, 1-25 (MGPKLLESRLCLLLLLRLVLMLASC), serve as a signal peptide directing secretion. The Proton acceptor role is filled by His-38. Asn-41 carries N-linked (GlcNAc...) asparagine glycosylation. 4 disulfide bridges follow: Cys-47–Cys-106, Cys-61–Cys-119, Cys-79–Cys-134, and Cys-86–Cys-94. 62–66 (KGLNT) contributes to the substrate binding site. Residues Asn-89, Asn-96, and Asn-107 are each glycosylated (N-linked (GlcNAc...) asparagine). His-151 serves as the catalytic Proton donor.

This sequence belongs to the pancreatic ribonuclease family.

This chain is Eosinophil cationic-type ribonuclease 3 (Ear3), found in Mus musculus (Mouse).